The sequence spans 491 residues: Cytochrome P450 2H2 (491 aa).

Cys436 is a binding site for heme.

The protein belongs to the cytochrome P450 family. Requires heme as cofactor.

Its subcellular location is the endoplasmic reticulum membrane. The protein localises to the microsome membrane. The catalysed reaction is an organic molecule + reduced [NADPH--hemoprotein reductase] + O2 = an alcohol + oxidized [NADPH--hemoprotein reductase] + H2O + H(+). In terms of biological role, cytochromes P450 are a group of heme-thiolate monooxygenases. In liver microsomes, this enzyme is involved in an NADPH-dependent electron transport pathway. It oxidizes a variety of structurally unrelated compounds, including steroids, fatty acids, and xenobiotics. The polypeptide is Cytochrome P450 2H2 (CYP2H2) (Gallus gallus (Chicken)).